Here is a 416-residue protein sequence, read N- to C-terminus: S-adenosylmethionine synthase (416 aa).

H16 is a binding site for ATP. Residue D18 coordinates Mg(2+). E44 contributes to the K(+) binding site. The L-methionine site is built by E57 and Q100. A flexible loop region spans residues 100–110; it reads QSPDIAQGVTQ. Residues 175–177, 251–252, D260, 266–267, A283, and K287 contribute to the ATP site; these read DGK, KF, and RK. Residue D260 coordinates L-methionine. L-methionine is bound at residue K291.

It belongs to the AdoMet synthase family. In terms of assembly, homotetramer; dimer of dimers. The cofactor is Mg(2+). Requires K(+) as cofactor.

Its subcellular location is the cytoplasm. It carries out the reaction L-methionine + ATP + H2O = S-adenosyl-L-methionine + phosphate + diphosphate. It functions in the pathway amino-acid biosynthesis; S-adenosyl-L-methionine biosynthesis; S-adenosyl-L-methionine from L-methionine: step 1/1. Functionally, catalyzes the formation of S-adenosylmethionine (AdoMet) from methionine and ATP. The overall synthetic reaction is composed of two sequential steps, AdoMet formation and the subsequent tripolyphosphate hydrolysis which occurs prior to release of AdoMet from the enzyme. The protein is S-adenosylmethionine synthase of Crocosphaera subtropica (strain ATCC 51142 / BH68) (Cyanothece sp. (strain ATCC 51142)).